The following is a 375-amino-acid chain: Probable UDP-N-acetylglucosamine 2-epimerase (375 aa).

Belongs to the UDP-N-acetylglucosamine 2-epimerase family.

It is found in the cytoplasm. It carries out the reaction UDP-N-acetyl-alpha-D-glucosamine = UDP-N-acetyl-alpha-D-mannosamine. Its pathway is glycan metabolism; exopolysaccharide EPS I biosynthesis. In terms of biological role, may be involved in synthesis of N-acetyltrideoxygalactose, a component of exopolysaccharide EPS I which functions as a virulence factor. The sequence is that of Probable UDP-N-acetylglucosamine 2-epimerase (epsC) from Ralstonia solanacearum (Pseudomonas solanacearum).